The primary structure comprises 625 residues: Probable potassium transport system protein Kup (625 aa).

12 helical membrane-spanning segments follow: residues 13–33 (TALAALGVVFGDIGTSPLYAL), 53–73 (ILSIIFWCLMLIISIKYVAIV), 103–123 (IYMIAIGFIGASLFFGDGIIT), 141–161 (VFDPFIMPIAIAIIVTLFLVQ), 172–192 (FGPITLVWFLSLGILGIHSVI), 206–226 (AIQFIYHHPIMTFFVMGAVVL), 250–270 (WFFVVLPCLVLNYAGQGALLL), 282–302 (LLVPQWALYPMIIMATMATVI), 340–360 (IYVPFLNWLLLIAIIILILIF), 369–389 (AYGLAVTLTMLCDTILVAVFI), 400–420 (VLLLIIPFFILESVLVGATSL), and 422–442 (ILSGGWVPLLIGAIAVTILMT).

This sequence belongs to the HAK/KUP transporter (TC 2.A.72) family.

The protein localises to the cell inner membrane. The enzyme catalyses K(+)(in) + H(+)(in) = K(+)(out) + H(+)(out). In terms of biological role, transport of potassium into the cell. Likely operates as a K(+):H(+) symporter. In Acinetobacter baumannii (strain AYE), this protein is Probable potassium transport system protein Kup.